The following is a 192-amino-acid chain: ATP-dependent Clp protease proteolytic subunit 1 (192 aa).

Residue Ser92 is the Nucleophile of the active site. His117 is a catalytic residue.

This sequence belongs to the peptidase S14 family. In terms of assembly, fourteen ClpP subunits assemble into 2 heptameric rings which stack back to back to give a disk-like structure with a central cavity, resembling the structure of eukaryotic proteasomes.

The protein localises to the cytoplasm. The catalysed reaction is Hydrolysis of proteins to small peptides in the presence of ATP and magnesium. alpha-casein is the usual test substrate. In the absence of ATP, only oligopeptides shorter than five residues are hydrolyzed (such as succinyl-Leu-Tyr-|-NHMec, and Leu-Tyr-Leu-|-Tyr-Trp, in which cleavage of the -Tyr-|-Leu- and -Tyr-|-Trp bonds also occurs).. Functionally, cleaves peptides in various proteins in a process that requires ATP hydrolysis. Has a chymotrypsin-like activity. Plays a major role in the degradation of misfolded proteins. The sequence is that of ATP-dependent Clp protease proteolytic subunit 1 from Chlamydia muridarum (strain MoPn / Nigg).